The following is a 275-amino-acid chain: Elongation factor Ts (275 aa).

Positions 80–83 are involved in Mg(2+) ion dislocation from EF-Tu; sequence TDFV.

Belongs to the EF-Ts family.

The protein localises to the cytoplasm. Its function is as follows. Associates with the EF-Tu.GDP complex and induces the exchange of GDP to GTP. It remains bound to the aminoacyl-tRNA.EF-Tu.GTP complex up to the GTP hydrolysis stage on the ribosome. This is Elongation factor Ts from Clavibacter michiganensis subsp. michiganensis (strain NCPPB 382).